Consider the following 280-residue polypeptide: Meiotic spindle formation protein 2 (280 aa).

The disordered stretch occupies residues 1–104; the sequence is MSGLDDRKKL…LPKSSPESSV (104 aa). Over residues 72–92 the composition is skewed to basic and acidic residues; the sequence is LHSESKKELSRNPVSRGEEHS. Over residues 93–104 the composition is skewed to low complexity; the sequence is SSLPKSSPESSV.

Interacts with mei-1.

Its subcellular location is the cytoplasm. It localises to the cytoskeleton. The protein localises to the spindle pole. Forms a heterodimeric complex in conjunction with mei-1 which severs microtubules in vitro in an ATP-dependent manner. This activity may promote rapid reorganization of cellular microtubule arrays. May act to target mei-1 within the cell. Required specifically for meiotic spindle formation in the female germline. This is Meiotic spindle formation protein 2 (mei-2) from Caenorhabditis elegans.